The following is a 176-amino-acid chain: MLQLTTYRNLQVFLVIMTAIGMSFALFFLQRYMGFSPCPLCIFQRIGLMIMGGFALIAALFHPKSMVIRLLLWLGSLAGIGWAAIVAGRHVWLQHLPADQVPSCGPGLDYWLDTLPMQQVLKEVFAGSGECASIEWTFLGLSIPEQSLILFSILILTHLLILWRIVRPSTPKPLAR.

The Cytoplasmic segment spans residues 1 to 11; sequence MLQLTTYRNLQ. A helical transmembrane segment spans residues 12–28; that stretch reads VFLVIMTAIGMSFALFF. The Periplasmic portion of the chain corresponds to 29–46; that stretch reads LQRYMGFSPCPLCIFQRI. C38 and C41 are disulfide-bonded. The chain crosses the membrane as a helical span at residues 47 to 63; sequence GLMIMGGFALIAALFHP. Over 64 to 70 the chain is Cytoplasmic; that stretch reads KSMVIRL. Residues 71-88 form a helical membrane-spanning segment; it reads LLWLGSLAGIGWAAIVAG. Topologically, residues 89 to 145 are periplasmic; sequence RHVWLQHLPADQVPSCGPGLDYWLDTLPMQQVLKEVFAGSGECASIEWTFLGLSIPE. C104 and C131 are oxidised to a cystine. A helical transmembrane segment spans residues 146-164; that stretch reads QSLILFSILILTHLLILWR. Residues 165–176 lie on the Cytoplasmic side of the membrane; that stretch reads IVRPSTPKPLAR.

The protein belongs to the DsbB family.

It is found in the cell inner membrane. In terms of biological role, required for disulfide bond formation in some periplasmic proteins. Acts by oxidizing the DsbA protein. This chain is Disulfide bond formation protein B, found in Psychrobacter arcticus (strain DSM 17307 / VKM B-2377 / 273-4).